We begin with the raw amino-acid sequence, 226 residues long: Cytidylate kinase (226 aa).

Position 10–18 (10–18 (GPASSGKST)) interacts with ATP.

Belongs to the cytidylate kinase family. Type 1 subfamily.

It is found in the cytoplasm. The enzyme catalyses CMP + ATP = CDP + ADP. The catalysed reaction is dCMP + ATP = dCDP + ADP. In Streptococcus pyogenes serotype M28 (strain MGAS6180), this protein is Cytidylate kinase.